A 744-amino-acid polypeptide reads, in one-letter code: Catalase-peroxidase (744 aa).

A cross-link (tryptophyl-tyrosyl-methioninium (Trp-Tyr) (with M-257)) is located at residues 108–231 (WHSAGTYRIS…LAAVQMGLIY (124 aa)). The active-site Proton acceptor is the H109. A cross-link (tryptophyl-tyrosyl-methioninium (Tyr-Met) (with W-108)) is located at residues 231-257 (YVNPEGPNGNPDPIAAARDIRETFRRM). H272 lines the heme b pocket. The tract at residues 353 to 372 (ANQWKPKDGAGAGTVPDAHD) is disordered.

Belongs to the peroxidase family. Peroxidase/catalase subfamily. In terms of assembly, homodimer or homotetramer. The cofactor is heme b. Post-translationally, formation of the three residue Trp-Tyr-Met cross-link is important for the catalase, but not the peroxidase activity of the enzyme.

The catalysed reaction is H2O2 + AH2 = A + 2 H2O. It catalyses the reaction 2 H2O2 = O2 + 2 H2O. Its function is as follows. Bifunctional enzyme with both catalase and broad-spectrum peroxidase activity. The polypeptide is Catalase-peroxidase (Frankia casuarinae (strain DSM 45818 / CECT 9043 / HFP020203 / CcI3)).